A 432-amino-acid chain; its full sequence is Glutamate-1-semialdehyde 2,1-aminomutase (432 aa).

An N6-(pyridoxal phosphate)lysine modification is found at Lys270.

This sequence belongs to the class-III pyridoxal-phosphate-dependent aminotransferase family. HemL subfamily. In terms of assembly, homodimer. Requires pyridoxal 5'-phosphate as cofactor.

The protein resides in the cytoplasm. It catalyses the reaction (S)-4-amino-5-oxopentanoate = 5-aminolevulinate. It functions in the pathway porphyrin-containing compound metabolism; protoporphyrin-IX biosynthesis; 5-aminolevulinate from L-glutamyl-tRNA(Glu): step 2/2. The sequence is that of Glutamate-1-semialdehyde 2,1-aminomutase from Acinetobacter baylyi (strain ATCC 33305 / BD413 / ADP1).